Consider the following 454-residue polypeptide: Allantoinase (454 aa).

His60, His62, Lys147, His183, His239, and Asp312 together coordinate Zn(2+). Lys147 is subject to N6-carboxylysine.

The protein belongs to the metallo-dependent hydrolases superfamily. Allantoinase family. In terms of assembly, homotetramer. Requires Zn(2+) as cofactor. In terms of processing, carboxylation allows a single lysine to coordinate two zinc ions.

The enzyme catalyses (S)-allantoin + H2O = allantoate + H(+). It participates in nitrogen metabolism; (S)-allantoin degradation; allantoate from (S)-allantoin: step 1/1. Catalyzes the conversion of allantoin (5-ureidohydantoin) to allantoic acid by hydrolytic cleavage of the five-member hydantoin ring. This Rubrobacter xylanophilus (strain DSM 9941 / JCM 11954 / NBRC 16129 / PRD-1) protein is Allantoinase.